The chain runs to 487 residues: uncharacterized protein (487 aa).

The first 31 residues, 1-31, serve as a signal peptide directing secretion; it reads MRFHRQGISAIIGVLLIVLLGFCWKLSGSYG. 8 N-linked (GlcNAc...) asparagine glycosylation sites follow: asparagine 40, asparagine 68, asparagine 150, asparagine 220, asparagine 304, asparagine 367, asparagine 442, and asparagine 448. A disordered region spans residues 141 to 176; it reads LERRHGRFGNGTNGDHPKGPPPPPPPPDEKGRGSQK.

N-glycosylated.

This is an uncharacterized protein from Saccharomyces cerevisiae (strain ATCC 204508 / S288c) (Baker's yeast).